Here is a 616-residue protein sequence, read N- to C-terminus: Dihydroxy-acid dehydratase (616 aa).

A Mg(2+)-binding site is contributed by Asp-81. Cys-122 serves as a coordination point for [2Fe-2S] cluster. Residues Asp-123 and Lys-124 each contribute to the Mg(2+) site. Lys-124 carries the post-translational modification N6-carboxylysine. Residue Cys-195 coordinates [2Fe-2S] cluster. Glu-491 provides a ligand contact to Mg(2+). Ser-517 acts as the Proton acceptor in catalysis.

It belongs to the IlvD/Edd family. As to quaternary structure, homodimer. [2Fe-2S] cluster serves as cofactor. Mg(2+) is required as a cofactor.

It catalyses the reaction (2R)-2,3-dihydroxy-3-methylbutanoate = 3-methyl-2-oxobutanoate + H2O. The enzyme catalyses (2R,3R)-2,3-dihydroxy-3-methylpentanoate = (S)-3-methyl-2-oxopentanoate + H2O. Its pathway is amino-acid biosynthesis; L-isoleucine biosynthesis; L-isoleucine from 2-oxobutanoate: step 3/4. The protein operates within amino-acid biosynthesis; L-valine biosynthesis; L-valine from pyruvate: step 3/4. Functions in the biosynthesis of branched-chain amino acids. Catalyzes the dehydration of (2R,3R)-2,3-dihydroxy-3-methylpentanoate (2,3-dihydroxy-3-methylvalerate) into 2-oxo-3-methylpentanoate (2-oxo-3-methylvalerate) and of (2R)-2,3-dihydroxy-3-methylbutanoate (2,3-dihydroxyisovalerate) into 2-oxo-3-methylbutanoate (2-oxoisovalerate), the penultimate precursor to L-isoleucine and L-valine, respectively. This is Dihydroxy-acid dehydratase from Blochmanniella pennsylvanica (strain BPEN).